The following is a 110-amino-acid chain: Large ribosomal subunit protein uL22 (110 aa).

The protein belongs to the universal ribosomal protein uL22 family. In terms of assembly, part of the 50S ribosomal subunit.

Functionally, this protein binds specifically to 23S rRNA; its binding is stimulated by other ribosomal proteins, e.g. L4, L17, and L20. It is important during the early stages of 50S assembly. It makes multiple contacts with different domains of the 23S rRNA in the assembled 50S subunit and ribosome. The globular domain of the protein is located near the polypeptide exit tunnel on the outside of the subunit, while an extended beta-hairpin is found that lines the wall of the exit tunnel in the center of the 70S ribosome. This is Large ribosomal subunit protein uL22 from Baumannia cicadellinicola subsp. Homalodisca coagulata.